Here is a 148-residue protein sequence, read N- to C-terminus: Large ribosomal subunit protein uL15 (148 aa).

The span at 1 to 30 shows a compositional bias: basic residues; the sequence is MPSRLRKTRKLRGHVSHGHGRIGKHRKHPG. The interval 1–37 is disordered; sequence MPSRLRKTRKLRGHVSHGHGRIGKHRKHPGGRGNAGG. His39 is subject to (3S)-3-hydroxyhistidine. Lys47 and Lys55 each carry N6-acetyllysine. A Phosphoserine modification is found at Ser68. Residue Lys110 is modified to N6-acetyllysine.

The protein belongs to the universal ribosomal protein uL15 family. Component of the large ribosomal subunit. Post-translationally, hydroxylated on His-39 by MINA.

The protein resides in the cytoplasm. Its function is as follows. Component of the large ribosomal subunit. The ribosome is a large ribonucleoprotein complex responsible for the synthesis of proteins in the cell. This Rattus norvegicus (Rat) protein is Large ribosomal subunit protein uL15 (Rpl27a).